Reading from the N-terminus, the 182-residue chain is Peptidyl-prolyl cis-trans isomerase C, mitochondrial (182 aa).

Residues 1–20 constitute a mitochondrion transit peptide; the sequence is MFKRSIIQQSRLFSNSASRL. The PPIase cyclophilin-type domain occupies 25 to 181; the sequence is FFDPAVNGTK…AEIVIEEAGE (157 aa).

It belongs to the cyclophilin-type PPIase family.

The protein localises to the mitochondrion matrix. It catalyses the reaction [protein]-peptidylproline (omega=180) = [protein]-peptidylproline (omega=0). Its activity is regulated as follows. Inhibited by the immunosuppressant drug cyclosporin A and by SDZ NIM811, a PPIase inhibitor. PPIases accelerate the folding of proteins. It catalyzes the cis-trans isomerization of proline imidic peptide bonds in oligopeptides. This isozyme is required for growth on lactate at high temperature. The sequence is that of Peptidyl-prolyl cis-trans isomerase C, mitochondrial (CPR3) from Saccharomyces cerevisiae (strain ATCC 204508 / S288c) (Baker's yeast).